The primary structure comprises 502 residues: N-sulphoglucosamine sulphohydrolase (502 aa).

An N-terminal signal peptide occupies residues 1–20; it reads MSCPVPACCALLLVLGLCRA. Ca(2+) is bound by residues D31 and D32. N-linked (GlcNAc...) asparagine glycosylation occurs at N41. C70 provides a ligand contact to Ca(2+). C70 functions as the Nucleophile in the catalytic mechanism. C70 carries the post-translational modification 3-oxoalanine (Cys). N-linked (GlcNAc...) asparagine glycosylation is found at N142 and N151. An intrachain disulfide couples C183 to C194. Residue N264 is glycosylated (N-linked (GlcNAc...) asparagine). Ca(2+) contacts are provided by D273 and N274. An N-linked (GlcNAc...) asparagine glycan is attached at N413. A disulfide bridge links C481 with C495.

This sequence belongs to the sulfatase family. The cofactor is Ca(2+). In terms of processing, the conversion to 3-oxoalanine (also known as C-formylglycine, FGly), of a serine or cysteine residue in prokaryotes and of a cysteine residue in eukaryotes, is critical for catalytic activity.

It localises to the lysosome. The enzyme catalyses N-sulfo-D-glucosamine + H2O = D-glucosamine + sulfate. Its function is as follows. Catalyzes a step in lysosomal heparan sulfate degradation. This Homo sapiens (Human) protein is N-sulphoglucosamine sulphohydrolase (SGSH).